The following is a 381-amino-acid chain: Alkanesulfonate monooxygenase (381 aa).

The protein belongs to the SsuD family. Homotetramer.

It carries out the reaction an alkanesulfonate + FMNH2 + O2 = an aldehyde + FMN + sulfite + H2O + 2 H(+). Its function is as follows. Catalyzes the desulfonation of aliphatic sulfonates. In Escherichia fergusonii (strain ATCC 35469 / DSM 13698 / CCUG 18766 / IAM 14443 / JCM 21226 / LMG 7866 / NBRC 102419 / NCTC 12128 / CDC 0568-73), this protein is Alkanesulfonate monooxygenase.